We begin with the raw amino-acid sequence, 86 residues long: Small ribosomal subunit protein bS20 (86 aa).

Over residues 1 to 27 (MANIKSAKKRAVQSEKRRQHNASRRSM) the composition is skewed to basic residues. The tract at residues 1–28 (MANIKSAKKRAVQSEKRRQHNASRRSMM) is disordered.

The protein belongs to the bacterial ribosomal protein bS20 family.

In terms of biological role, binds directly to 16S ribosomal RNA. The chain is Small ribosomal subunit protein bS20 from Proteus mirabilis (strain HI4320).